A 393-amino-acid polypeptide reads, in one-letter code: Arginine--pyruvate transaminase AruH (393 aa).

Residue K237 is modified to N6-(pyridoxal phosphate)lysine.

The protein belongs to the class-I pyridoxal-phosphate-dependent aminotransferase family. In terms of assembly, homodimer. Requires pyridoxal 5'-phosphate as cofactor.

It carries out the reaction L-arginine + pyruvate = 5-guanidino-2-oxopentanoate + L-alanine. Its pathway is amino-acid degradation; L-arginine degradation. Catalyzes the conversion of L-arginine into 2-ketoarginine via transamination. L-arginine is the best substrate, but it can also use L-lysine, L-methionine, L-leucine, ornithine and L-glutamine, which indicates that it may have a broader physiological function in amino acid catabolism. The polypeptide is Arginine--pyruvate transaminase AruH (aruH) (Pseudomonas aeruginosa (strain ATCC 15692 / DSM 22644 / CIP 104116 / JCM 14847 / LMG 12228 / 1C / PRS 101 / PAO1)).